The chain runs to 339 residues: DNA-directed RNA polymerase subunit alpha (339 aa).

An alpha N-terminal domain (alpha-NTD) region spans residues 1 to 233; it reads MVREEVAGST…DLFLPFLHAE (233 aa). The tract at residues 266 to 339 is alpha C-terminal domain (alpha-CTD); sequence GIPLNCIFID…IDLLKNKLSF (74 aa).

It belongs to the RNA polymerase alpha chain family. In plastids the minimal PEP RNA polymerase catalytic core is composed of four subunits: alpha, beta, beta', and beta''. When a (nuclear-encoded) sigma factor is associated with the core the holoenzyme is formed, which can initiate transcription.

It is found in the plastid. It localises to the chloroplast. It carries out the reaction RNA(n) + a ribonucleoside 5'-triphosphate = RNA(n+1) + diphosphate. Functionally, DNA-dependent RNA polymerase catalyzes the transcription of DNA into RNA using the four ribonucleoside triphosphates as substrates. The chain is DNA-directed RNA polymerase subunit alpha from Hordeum bulbosum (Bulbous barley).